A 159-amino-acid chain; its full sequence is uncharacterized protein (159 aa).

The interval valine 9–serine 36 is disordered.

This is an uncharacterized protein from Caenorhabditis elegans.